The sequence spans 1427 residues: Coiled-coil domain-containing protein 144A (1427 aa).

Residues 1–11 (MASWGGEKRGG) show a composition bias toward basic and acidic residues. Disordered regions lie at residues 1-32 (MASWGGEKRGGAEGSPKPAVYATRKTPSVGSQ), 87-189 (AARS…LTER), 213-261 (LPEN…CDRE), 453-485 (NMNQNSDSGSTNNYKSLKPKLENLSSLPPDSDR), and 528-586 (EEEM…EVKN). Polar residues-rich tracts occupy residues 129 to 150 (PESLPQNNNPDWHPTNLTLSDE) and 167 to 178 (VSPSMPENQSAT). The segment covering 224–234 (QDSELTSEEEQ) has biased composition (acidic residues). The span at 453-467 (NMNQNSDSGSTNNYK) shows a compositional bias: polar residues. The stretch at 490–545 (YLHEELQQDMQKFKNEVNTLEEEFLALKKEDVQLHKDVEEEMEKHRSNSTELSGTL) forms a coiled coil. Basic and acidic residues predominate over residues 528–537 (EEEMEKHRSN). Low complexity predominate over residues 543-552 (GTLTDGTTVG). Residues 563–584 (PRKENGEHDRPADKTSNEKNEV) show a composition bias toward basic and acidic residues. 2 coiled-coil regions span residues 648–1129 (LLKL…DLTE) and 1155–1309 (FSMK…TQLT).

Belongs to the CCDC144 family.

In terms of biological role, may play a role in preventing the formation of kidney stones through inhibition of calcium oxalate monohydrate (COM) crystallization, attenuating COM-induced apoptotic injury to renal epithelial cells. May exhibit antilithiatic (preventing the formation of kidney stones) activity through crystal binding, hindering the crystal attachment to renal epithelial cells, a pre-requisite to initiate inflammatory response. In Homo sapiens (Human), this protein is Coiled-coil domain-containing protein 144A (CCDC144A).